The primary structure comprises 361 residues: Homocitrate synthase (361 aa).

Residues 1-249 form the Pyruvate carboxyltransferase domain; sequence MILDSTLREG…VKKYRLDKLY (249 aa). Arginine 8 contributes to the 2-oxoglutarate binding site. A Mg(2+)-binding site is contributed by glutamate 9. 2-oxoglutarate contacts are provided by histidine 68, arginine 128, and threonine 162. The Mg(2+) site is built by histidine 188 and histidine 190. Histidine 282 (proton acceptor) is an active-site residue.

Belongs to the alpha-IPM synthase/homocitrate synthase family. Homocitrate synthase LYS20/LYS21 subfamily. Mg(2+) is required as a cofactor. Requires Mn(2+) as cofactor.

The enzyme catalyses acetyl-CoA + 2-oxoglutarate + H2O = (2R)-homocitrate + CoA + H(+). Its pathway is amino-acid biosynthesis; L-lysine biosynthesis via AAA pathway; L-alpha-aminoadipate from 2-oxoglutarate: step 1/5. Catalyzes the aldol-type condensation of 2-oxoglutarate with acetyl-CoA to yield homocitrate. Carries out the first step of the alpha-aminoadipate (AAA) lysine biosynthesis pathway. The polypeptide is Homocitrate synthase (Pyrococcus horikoshii (strain ATCC 700860 / DSM 12428 / JCM 9974 / NBRC 100139 / OT-3)).